The chain runs to 602 residues: Elongation factor 4 (602 aa).

Positions 6–188 constitute a tr-type G domain; that stretch reads DHIRNFSIVA…AIVNKLPAPK (183 aa). Residues 18–23 and 135–138 contribute to the GTP site; these read DHGKST and NKID.

This sequence belongs to the TRAFAC class translation factor GTPase superfamily. Classic translation factor GTPase family. LepA subfamily.

It localises to the cell inner membrane. It catalyses the reaction GTP + H2O = GDP + phosphate + H(+). Functionally, required for accurate and efficient protein synthesis under certain stress conditions. May act as a fidelity factor of the translation reaction, by catalyzing a one-codon backward translocation of tRNAs on improperly translocated ribosomes. Back-translocation proceeds from a post-translocation (POST) complex to a pre-translocation (PRE) complex, thus giving elongation factor G a second chance to translocate the tRNAs correctly. Binds to ribosomes in a GTP-dependent manner. The sequence is that of Elongation factor 4 from Brucella abortus (strain 2308).